The following is a 322-amino-acid chain: Nodulation protein D 1 (322 aa).

An HTH lysR-type domain is found at Leu6–Thr63. Positions Leu23–Thr42 form a DNA-binding region, H-T-H motif.

The protein belongs to the LysR transcriptional regulatory family.

In terms of biological role, regulates the expression of the nod abcFE genes which encode other nodulation proteins. NodD is also a negative regulator of its own expression. Binds flavonoids as inducers. The polypeptide is Nodulation protein D 1 (nodD1) (Sinorhizobium fredii (strain NBRC 101917 / NGR234)).